A 511-amino-acid polypeptide reads, in one-letter code: MSGGFELQPRDGGPRVALAPGETVIGRGPLLGITDKRVSRRHAILEVAGGQLRIKPIHTNPCFYQSSEKSQLLPLKPNLWCYLNPGDSFSLLVDKYIFRILSIPSEVEMQCTLRNSQVLDEDNILNETPKSPVINLPHETTGASQLEGSTEIAKTQMTPTNSVSFLGENRDCNKQQPILAERKRILPTWMLAEHLSDQNLSVPAISGGNVIQGSGKEEICKDKSQLNTTQQGRRQLISSGSSENTSAEQDTGEECKNTDQEESTISSKEMPQSFSAITLSNTEMNNIKTNAQRNKLPIEELGKVSKHKIATKRTPHKEDEAMSCSENCSSAQGDSLQDESQGSHSESSSNPSNPETLHAKATDSVLQGSEGNKVKRTSCMYGANCYRKNPVHFQHFSHPGDSDYGGVQIVGQDETDDRPECPYGPSCYRKNPQHKIEYRHNTLPVRNVLDEDNDNVGQPNEYDLNDSFLDDEEEDYEPTDEDSDWEPGKEDEEKEDVEELLKEAKRFMKRK.

The region spanning Met-1 to Glu-108 is the FHA-like domain. Ser-116 bears the Phosphoserine; by ATM mark. At Ser-149 the chain carries Phosphoserine. The short motif at Arg-182–Leu-191 is the KBM element. The tract at residues Lys-223 to Glu-370 is disordered. Composition is skewed to polar residues over residues Gln-225–Gln-249 and Ser-263–Arg-293. The segment covering Val-304 to Pro-315 has biased composition (basic residues). Residues Cys-324 to His-344 are compositionally biased toward polar residues. A compositionally biased stretch (low complexity) spans Ser-345–Glu-355. A glycoprotein-binding residues include Arg-376, Tyr-381, Tyr-386, and Arg-387. Residues Thr-377–His-398 form a PBZ-type 1 zinc finger. A flexible linker region spans residues Gly-406–Asp-416. The PBZ-type 2 zinc finger occupies Pro-419–His-440. 3 residues coordinate a glycoprotein: Tyr-423, Tyr-428, and Arg-429. Residues Leu-449 to Val-497 form a disordered region. Over residues Phe-468–Val-497 the composition is skewed to acidic residues. The NAP1L motif motif lies at Tyr-476–Leu-500. A coiled-coil region spans residues Pro-487 to Lys-511.

It belongs to the APLF family. Interacts with LIG4. Interacts with PARP1. Interacts with XRCC4. Interacts (via KBM motif) with XRCC5 and XRCC6; promoting recruitment to DNA damage sites. Interacts with XRCC1. Interacts (via C-terminal disordered region) with histones; interacts with histone H2A, H2B and H3-H4. Poly-ADP-ribosylated. In addition to binding non covalently poly-ADP-ribose via its PBZ-type zinc fingers, the protein is also covalently poly-ADP-ribosylated by PARP1. In terms of processing, phosphorylated in an ATM-dependent manner upon double-strand DNA break.

The protein resides in the nucleus. The protein localises to the chromosome. It is found in the cytoplasm. Its subcellular location is the cytosol. Histone chaperone involved in single-strand and double-strand DNA break repair. Recruited to sites of DNA damage through interaction with branched poly-ADP-ribose chains, a polymeric post-translational modification synthesized transiently at sites of chromosomal damage to accelerate DNA strand break repair reactions. Following recruitment to DNA damage sites, acts as a histone chaperone that mediates histone eviction during DNA repair and promotes recruitment of histone variant MACROH2A1. Also has a nuclease activity: displays apurinic-apyrimidinic (AP) endonuclease and 3'-5' exonuclease activities in vitro. Also able to introduce nicks at hydroxyuracil and other types of pyrimidine base damage. Together with PARP3, promotes the retention of the LIG4-XRCC4 complex on chromatin and accelerate DNA ligation during non-homologous end-joining (NHEJ). Also acts as a negative regulator of cell pluripotency by promoting histone exchange. Required for the embryo implantation during the epithelial to mesenchymal transition in females. In Homo sapiens (Human), this protein is Aprataxin and PNK-like factor.